The sequence spans 388 residues: Probable ubiquitin-conjugating enzyme E2 L709 (388 aa).

Residues 3–162 (NVHKRVIKDI…GNDLMVQKLF (160 aa)) form the UBC core domain. The Glycyl thioester intermediate role is filled by cysteine 95. The disordered stretch occupies residues 195–388 (VEEKSAKTSK…SSKSSKTGKK (194 aa)). Acidic residues-rich tracts occupy residues 221-238 (SEEE…DSES) and 246-297 (DVVD…ESEE). Residues 310 to 388 (KTTTKSSSTK…SSKSSKTGKK (79 aa)) show a composition bias toward low complexity.

It belongs to the ubiquitin-conjugating enzyme family.

The catalysed reaction is S-ubiquitinyl-[E1 ubiquitin-activating enzyme]-L-cysteine + [E2 ubiquitin-conjugating enzyme]-L-cysteine = [E1 ubiquitin-activating enzyme]-L-cysteine + S-ubiquitinyl-[E2 ubiquitin-conjugating enzyme]-L-cysteine.. It functions in the pathway protein modification; protein ubiquitination. Its function is as follows. Catalyzes the covalent attachment of ubiquitin to other proteins. The polypeptide is Probable ubiquitin-conjugating enzyme E2 L709 (Acanthamoeba polyphaga (Amoeba)).